Consider the following 773-residue polypeptide: LON peptidase N-terminal domain and RING finger protein 1 (773 aa).

Positions methionine 1–glutamate 29 are disordered. The stretch at tryptophan 48 to alanine 81 is one TPR 1 repeat. The segment at cysteine 123–arginine 159 adopts an RING-type 1 zinc-finger fold. TPR repeat units lie at residues alanine 212–aspartate 244, isoleucine 246–tryptophan 278, and proline 279–phenylalanine 312. Residues glutamate 359–lysine 370 are compositionally biased toward polar residues. The interval glutamate 359–asparagine 388 is disordered. Residue serine 431 is modified to Phosphoserine. An RING-type 2 zinc finger spans residues cysteine 479–lysine 517. The 211-residue stretch at threonine 558–serine 768 folds into the Lon N-terminal domain.

The polypeptide is LON peptidase N-terminal domain and RING finger protein 1 (LONRF1) (Homo sapiens (Human)).